The sequence spans 223 residues: Adenylate kinase (223 aa).

10–15 (GSGKGT) lines the ATP pocket. The segment at 30–59 (ESGAIFREHIGGGTELGKQAKAFIERGDLV) is NMP. Residues Ser-31, Arg-36, 57 to 59 (DLV), 84 to 87 (GFPR), and Gln-91 each bind AMP. The LID stretch occupies residues 125–164 (GRRLCKNDNNHPNNIFIDAIKPNGDVCRVCGGELSARSDD). Arg-126 lines the ATP pocket. Residues Arg-161 and Arg-173 each coordinate AMP. Gly-209 contributes to the ATP binding site.

The protein belongs to the adenylate kinase family. As to quaternary structure, monomer.

It is found in the cytoplasm. The enzyme catalyses AMP + ATP = 2 ADP. It participates in purine metabolism; AMP biosynthesis via salvage pathway; AMP from ADP: step 1/1. Its function is as follows. Catalyzes the reversible transfer of the terminal phosphate group between ATP and AMP. Plays an important role in cellular energy homeostasis and in adenine nucleotide metabolism. This is Adenylate kinase from Nitratidesulfovibrio vulgaris (strain ATCC 29579 / DSM 644 / CCUG 34227 / NCIMB 8303 / VKM B-1760 / Hildenborough) (Desulfovibrio vulgaris).